Here is a 153-residue protein sequence, read N- to C-terminus: Pheromone-binding protein Gp-9 (153 aa).

An N-terminal signal peptide occupies residues Met1–Ala19. Intrachain disulfides connect Cys37–Cys77, Cys73–Cys129, and Cys118–Cys138.

It belongs to the PBP/GOBP family. In terms of assembly, homodimer.

It is found in the secreted. Functionally, colony queen number, a major feature of social organization, is associated with worker genotype for Gp-9. Colonies are headed by either a single reproductive queen (monogyne form) or multiple queens (polygyne form). Differences in worker Gp-9 genotypes between social forms may cause differences in workers' abilities to recognize queens and regulate their numbers. In Solenopsis nigella gensterblumi (Fire ant), this protein is Pheromone-binding protein Gp-9.